The sequence spans 2542 residues: Zinc finger FYVE domain-containing protein 26 (2542 aa).

2 disordered regions span residues histidine 591–threonine 658 and valine 740–alanine 811. Residues serine 612 and serine 616 each carry the phosphoserine modification. A compositionally biased stretch (basic residues) spans arginine 752 to arginine 772. The segment covering serine 785–serine 803 has biased composition (low complexity). A Phosphoserine modification is found at serine 798. The stretch at methionine 866–aspartate 891 forms a coiled coil. The tract at residues serine 1273–aspartate 1292 is disordered. Basic and acidic residues predominate over residues serine 1281–proline 1290. Positions valine 1495–leucine 1522 form a coiled coil. Phosphoserine occurs at positions 1739, 1761, 1783, and 1785. The tract at residues proline 1746–proline 1807 is disordered. The segment covering serine 1757–alanine 1779 has biased composition (low complexity). The FYVE-type zinc-finger motif lies at aspartate 1815–asparagine 1875. Cysteine 1821, cysteine 1824, cysteine 1838, cysteine 1841, cysteine 1846, cysteine 1849, cysteine 1867, and cysteine 1870 together coordinate Zn(2+).

The protein belongs to the ZFYVE26 family. As to quaternary structure, interacts with AP5Z1, AP5B1, AP5S1 and SPG11. Interacts with TTC19 and KIF13A.

It localises to the cytoplasm. The protein resides in the cytoskeleton. Its subcellular location is the microtubule organizing center. It is found in the centrosome. The protein localises to the midbody. Phosphatidylinositol 3-phosphate-binding protein required for the abscission step in cytokinesis: recruited to the midbody during cytokinesis and acts as a regulator of abscission. May also be required for efficient homologous recombination DNA double-strand break repair. The polypeptide is Zinc finger FYVE domain-containing protein 26 (Zfyve26) (Rattus norvegicus (Rat)).